A 633-amino-acid chain; its full sequence is Rab11 family-interacting protein 4 (633 aa).

EF-hand domains lie at Leu17 to Gly52 and Ala50 to Cys85. Positions 30, 32, 34, 63, 65, 69, and 74 each coordinate Ca(2+). Disordered regions lie at residues Ser152–Leu182 and Gly218–Arg257. Over residues Thr238–Gln254 the composition is skewed to polar residues. Positions Ala410 to Tyr613 form a coiled coil. One can recognise an FIP-RBD domain in the interval Glu570–Lys632.

As to quaternary structure, homodimer. Forms a complex with Rab11 (rab11a or rab11b) and arf6.

It is found in the recycling endosome membrane. The protein resides in the cleavage furrow. Its subcellular location is the midbody. It localises to the cytoplasmic vesicle. Acts as a regulator of endocytic traffic by participating in membrane delivery. Required for the abscission step in cytokinesis, possibly by acting as an 'address tag' delivering recycling endosome membranes to the cleavage furrow during late cytokinesis. The sequence is that of Rab11 family-interacting protein 4 (rab11fip4) from Xenopus tropicalis (Western clawed frog).